The primary structure comprises 441 residues: Argininosuccinate lyase (441 aa).

This sequence belongs to the lyase 1 family. Argininosuccinate lyase subfamily.

It localises to the cytoplasm. The catalysed reaction is 2-(N(omega)-L-arginino)succinate = fumarate + L-arginine. It participates in amino-acid biosynthesis; L-arginine biosynthesis; L-arginine from L-ornithine and carbamoyl phosphate: step 3/3. This Thermoanaerobacter pseudethanolicus (strain ATCC 33223 / 39E) (Clostridium thermohydrosulfuricum) protein is Argininosuccinate lyase.